A 236-amino-acid chain; its full sequence is TVP38/TMEM64 family membrane protein YdjX (236 aa).

5 helical membrane passes run 7 to 27 (FLFA…FGLF), 50 to 70 (LYIL…ILVI), 72 to 92 (GGIV…ATLA), 156 to 176 (IAFW…IVIY), and 192 to 212 (FILQ…LAKL). The interval 73 to 183 (GIVFGPLLGT…VIYTVMASDL (111 aa)) is VTT domain.

It belongs to the TVP38/TMEM64 family.

The protein resides in the cell membrane. The protein is TVP38/TMEM64 family membrane protein YdjX (ydjX) of Escherichia coli (strain K12).